The chain runs to 448 residues: MSASAVNVNPGRNVVVVGTQWGDEGKGKIVDWLTDHAQGVVRFQGGHNAGHTLIIGGKKTILRLIPSGIMRPGVACYIGNGVVLSPEALFKEIEELESAGIDVQKRLFISEATTLILPYHVAIDQAREARSGAGKIGTTGRGIGPAYEDKVARRGLRVQDLFEPKAFAERLRANLDFHNFVLTQYLGAPAVDYQQTLDMMLSYADRLKPMVTDVSRRLYDENHVGNNLLFEGAQGTLLDIDHGTYPFVTSSNCVAGAATAGAGIGPQKLDYILGITKAYCTRVGSGPFPSELYDADNANRQEEVGLTLAKVGKEFGSVTGRPRRTGWLDAAALRRAIQINGVSGLCITKLDVLDGLDEVKLCVGYTIDGKDADILPRGAYEVSRCEPVYETFGGWKESTVGIKEWNKLPANAQAYLTRVQEVAGVPIDMVSTGPDRDETILLRHPFKV.

GTP contacts are provided by residues Gly22–Lys28 and Gly50–Thr52. Asp23 (proton acceptor) is an active-site residue. The Mg(2+) site is built by Asp23 and Gly50. IMP contacts are provided by residues Asp23–Lys26, Asn48–His51, Thr139, Arg153, Gln234, Thr249, and Arg321. His51 acts as the Proton donor in catalysis. Ser317–Arg323 is a binding site for substrate. GTP-binding positions include Arg323, Lys349–Asp351, and Ser431–Gly433.

It belongs to the adenylosuccinate synthetase family. As to quaternary structure, homodimer. Requires Mg(2+) as cofactor.

The protein resides in the cytoplasm. The catalysed reaction is IMP + L-aspartate + GTP = N(6)-(1,2-dicarboxyethyl)-AMP + GDP + phosphate + 2 H(+). It functions in the pathway purine metabolism; AMP biosynthesis via de novo pathway; AMP from IMP: step 1/2. Plays an important role in the de novo pathway of purine nucleotide biosynthesis. Catalyzes the first committed step in the biosynthesis of AMP from IMP. The chain is Adenylosuccinate synthetase from Paraburkholderia phymatum (strain DSM 17167 / CIP 108236 / LMG 21445 / STM815) (Burkholderia phymatum).